Here is a 287-residue protein sequence, read N- to C-terminus: ATP synthase gamma chain (287 aa).

It belongs to the ATPase gamma chain family. As to quaternary structure, F-type ATPases have 2 components, CF(1) - the catalytic core - and CF(0) - the membrane proton channel. CF(1) has five subunits: alpha(3), beta(3), gamma(1), delta(1), epsilon(1). CF(0) has three main subunits: a, b and c.

It localises to the cell inner membrane. Functionally, produces ATP from ADP in the presence of a proton gradient across the membrane. The gamma chain is believed to be important in regulating ATPase activity and the flow of protons through the CF(0) complex. The polypeptide is ATP synthase gamma chain (Salmonella agona (strain SL483)).